Here is a 189-residue protein sequence, read N- to C-terminus: Parkinson disease protein 7 homolog (189 aa).

N-acetylalanine is present on Ala2. 2 S-palmitoyl cysteine lipidation sites follow: Cys46 and Cys53. Position 67 is a phosphotyrosine (Tyr67). Catalysis depends on Cys106, which acts as the Nucleophile. At Cys106 the chain carries Cysteine sulfinic acid (-SO2H); alternate. The S-palmitoyl cysteine; alternate moiety is linked to residue Cys106. Residue His126 is part of the active site. Residue Lys130 forms a Glycyl lysine isopeptide (Lys-Gly) (interchain with G-Cter in SUMO) linkage. Lys148 is subject to N6-acetyllysine. N6-succinyllysine is present on Lys182.

Belongs to the peptidase C56 family. In terms of assembly, homodimer. Binds EFCAB6/DJBP and PIAS2. Part of a ternary complex containing PARK7, EFCAB6/DJBP and AR. Interacts (via N-terminus) with OTUD7B. Interacts with BBS1, HIPK1, CLCF1 and MTERF. Forms a complex with PINK1 and PRKN. Interacts (via C-terminus) with NCF1; the interaction is enhanced by LPS and modulates NCF1 phosphorylation and membrane translocation. Interacts with NENF. The cofactor is Deglycase activity does not require glutathione as a cofactor, however, glycated glutathione constitutes a PARK7 substrate.. Post-translationally, sumoylated on Lys-130 by PIAS2 or PIAS4; which is essential for cell-growth promoting activity and transforming activity. In terms of processing, undergoes cleavage of a C-terminal peptide and subsequent activation of protease activity in response to oxidative stress. As to expression, ubiquitous. Detected on epididymal sperm. Highly expressed in testis and prostate. Detected at lower levels in heart, lung, brain, liver, kidney, seminal vesicle, caput and corpus epididymis.

It localises to the cell membrane. It is found in the cytoplasm. The protein resides in the membrane raft. Its subcellular location is the nucleus. The protein localises to the mitochondrion. It localises to the endoplasmic reticulum. It catalyses the reaction N(omega)-(1-hydroxy-2-oxopropyl)-L-arginyl-[protein] + H2O = lactate + L-arginyl-[protein] + H(+). The enzyme catalyses N(6)-(1-hydroxy-2-oxopropyl)-L-lysyl-[protein] + H2O = lactate + L-lysyl-[protein] + H(+). It carries out the reaction S-(1-hydroxy-2-oxopropyl)-L-cysteinyl-[protein] + H2O = lactate + L-cysteinyl-[protein] + H(+). The catalysed reaction is N(omega)-(1-hydroxy-2-oxoethyl)-L-arginyl-[protein] + H2O = L-arginyl-[protein] + glycolate + H(+). It catalyses the reaction N(6)-(1-hydroxy-2-oxoethyl)-L-lysyl-[protein] + H2O = glycolate + L-lysyl-[protein] + H(+). The enzyme catalyses S-(1-hydroxy-2-oxoethyl)-L-cysteinyl-[protein] + H2O = glycolate + L-cysteinyl-[protein] + H(+). It carries out the reaction N(2)-(1-hydroxy-2-oxopropyl)-dGTP + H2O = lactate + dGTP + H(+). The catalysed reaction is N(2)-(1-hydroxy-2-oxopropyl)-GTP + H2O = lactate + GTP + H(+). It catalyses the reaction N(2)-(1-hydroxy-2-oxopropyl)-GDP + H2O = lactate + GDP + H(+). The enzyme catalyses N(2)-(1-hydroxy-2-oxopropyl)-GMP + H2O = lactate + GMP + H(+). It carries out the reaction N(2)-(1-hydroxy-2-oxoethyl)-dGTP + H2O = dGTP + glycolate + H(+). The catalysed reaction is N(2)-(1-hydroxy-2-oxoethyl)-GTP + H2O = glycolate + GTP + H(+). It catalyses the reaction N(2)-(1-hydroxy-2-oxoethyl)-GDP + H2O = glycolate + GDP + H(+). The enzyme catalyses N(2)-(1-hydroxy-2-oxoethyl)-GMP + H2O = glycolate + GMP + H(+). It carries out the reaction an N(2)-(1-hydroxy-2-oxopropyl)-guanosine in RNA + H2O = a guanosine in RNA + lactate + H(+). The catalysed reaction is an N(2)-(1-hydroxy-2-oxopropyl)-2'-deoxyguanosine in DNA + H2O = a 2'-deoxyguanosine in DNA + lactate + H(+). It catalyses the reaction an N(2)-(1-hydroxy-2-oxoethyl)-guanosine in RNA + H2O = a guanosine in RNA + glycolate + H(+). The enzyme catalyses an N(2)-(1-hydroxy-2-oxoethyl)-2'-deoxyguanosine in DNA + H2O = a 2'-deoxyguanosine in DNA + glycolate + H(+). Its function is as follows. Protein and nucleotide deglycase that catalyzes the deglycation of the Maillard adducts formed between amino groups of proteins or nucleotides and reactive carbonyl groups of glyoxals. Thus, functions as a protein deglycase that repairs methylglyoxal- and glyoxal-glycated proteins, and releases repaired proteins and lactate or glycolate, respectively. Deglycates cysteine, arginine and lysine residues in proteins, and thus reactivates these proteins by reversing glycation by glyoxals. Acts on early glycation intermediates (hemithioacetals and aminocarbinols), preventing the formation of advanced glycation endproducts (AGE) that cause irreversible damage. Also functions as a nucleotide deglycase able to repair glycated guanine in the free nucleotide pool (GTP, GDP, GMP, dGTP) and in DNA and RNA. Is thus involved in a major nucleotide repair system named guanine glycation repair (GG repair), dedicated to reversing methylglyoxal and glyoxal damage via nucleotide sanitization and direct nucleic acid repair. Also displays an apparent glyoxalase activity that in fact reflects its deglycase activity. Plays an important role in cell protection against oxidative stress and cell death acting as oxidative stress sensor and redox-sensitive chaperone and protease; functions probably related to its primary function. It is involved in neuroprotective mechanisms like the stabilization of NFE2L2 and PINK1 proteins, male fertility as a positive regulator of androgen signaling pathway as well as cell growth and transformation through, for instance, the modulation of NF-kappa-B signaling pathway. Eliminates hydrogen peroxide and protects cells against hydrogen peroxide-induced cell death. Required for correct mitochondrial morphology and function as well as for autophagy of dysfunctional mitochondria. Plays a role in regulating expression or stability of the mitochondrial uncoupling proteins SLC25A14 and SLC25A27 in dopaminergic neurons of the substantia nigra pars compacta and attenuates the oxidative stress induced by calcium entry into the neurons via L-type channels during pacemaking. Regulates astrocyte inflammatory responses, may modulate lipid rafts-dependent endocytosis in astrocytes and neuronal cells. In pancreatic islets, involved in the maintenance of mitochondrial reactive oxygen species (ROS) levels and glucose homeostasis in an age- and diet dependent manner. Protects pancreatic beta cells from cell death induced by inflammatory and cytotoxic setting. Binds to a number of mRNAs containing multiple copies of GG or CC motifs and partially inhibits their translation but dissociates following oxidative stress. Metal-binding protein able to bind copper as well as toxic mercury ions, enhances the cell protection mechanism against induced metal toxicity. In macrophages, interacts with the NADPH oxidase subunit NCF1 to direct NADPH oxidase-dependent ROS production, and protects against sepsis. In Rattus norvegicus (Rat), this protein is Parkinson disease protein 7 homolog.